The chain runs to 361 residues: Monodechloroaminopyrrolnitrin synthase PrnB (361 aa).

222–225 (PGAV) lines the substrate pocket. His313 provides a ligand contact to heme. Substrate contacts are provided by Tyr321 and Ser332.

It belongs to the PrnB family. Monomer. Requires heme b as cofactor.

The catalysed reaction is 7-chloro-L-tryptophan + AH2 + O2 = monodechloroaminopyrrolnitrin + A + CO2 + 2 H2O. It participates in antibiotic biosynthesis. Its function is as follows. Involved in the biosynthesis of the antifungal antibiotic pyrrolnitrin. Catalyzes the ring rearrangement and decarboxylation to convert 7-chloro-L-tryptophan (7-CLT) to monodechloroaminopyrrolnitrin (MDA). It can also use 7-chloro-D-tryptophan, but 7-chloro-L-tryptophan is the preferred natural enantiomer. This Pseudomonas fluorescens protein is Monodechloroaminopyrrolnitrin synthase PrnB (prnB).